Consider the following 87-residue polypeptide: Cell division topological specificity factor (87 aa).

The protein belongs to the MinE family.

In terms of biological role, prevents the cell division inhibition by proteins MinC and MinD at internal division sites while permitting inhibition at polar sites. This ensures cell division at the proper site by restricting the formation of a division septum at the midpoint of the long axis of the cell. The chain is Cell division topological specificity factor from Roseiflexus castenholzii (strain DSM 13941 / HLO8).